The primary structure comprises 63 residues: Cytotoxin homolog S3C2 (63 aa).

4 disulfides stabilise this stretch: C3/C22, C15/C40, C44/C55, and C56/C61.

It belongs to the three-finger toxin family. Short-chain subfamily. Orphan group XVI sub-subfamily. Expressed by the venom gland.

It is found in the secreted. The protein is Cytotoxin homolog S3C2 of Aspidelaps scutatus (Shield-nose snake).